Reading from the N-terminus, the 253-residue chain is Adapter protein MecA (253 aa).

Belongs to the MecA family. Homodimer.

Functionally, enables the recognition and targeting of unfolded and aggregated proteins to the ClpC protease or to other proteins involved in proteolysis. This is Adapter protein MecA from Streptococcus pyogenes serotype M18 (strain MGAS8232).